An 860-amino-acid chain; its full sequence is Linoleate 9S-lipoxygenase A (860 aa).

In terms of domain architecture, PLAT spans 29 to 159 (NALDFTDLAG…RYKSDRIFFA (131 aa)). The Lipoxygenase domain occupies 162-860 (PYLPSETPEL…GKGIPNSVSI (699 aa)). Residues 209–246 (PDQGKENVRTTLGGSADYPYPRRGRTGRPPTRTDPKSE) form a disordered region. The Fe cation site is built by His-521, His-526, His-712, Asn-716, and Ile-860.

The protein belongs to the lipoxygenase family. In terms of assembly, monomer. Fe cation is required as a cofactor. As to expression, expressed in germinating seeds as well as in ripening fruit.

The protein localises to the cytoplasm. The catalysed reaction is (9Z,12Z)-octadecadienoate + O2 = (9S)-hydroperoxy-(10E,12Z)-octadecadienoate. Its pathway is lipid metabolism; oxylipin biosynthesis. Plant lipoxygenase may be involved in a number of diverse aspects of plant physiology including growth and development, pest resistance, and senescence or responses to wounding. It catalyzes the hydroperoxidation of lipids containing a cis,cis-1,4-pentadiene structure. This Solanum lycopersicum (Tomato) protein is Linoleate 9S-lipoxygenase A (LOX1.1).